We begin with the raw amino-acid sequence, 447 residues long: ATP-dependent protease ATPase subunit HslU (447 aa).

ATP is bound by residues I18, 60–65 (GVGKTE), D259, E325, and R397.

This sequence belongs to the ClpX chaperone family. HslU subfamily. As to quaternary structure, a double ring-shaped homohexamer of HslV is capped on each side by a ring-shaped HslU homohexamer. The assembly of the HslU/HslV complex is dependent on binding of ATP.

It is found in the cytoplasm. Functionally, ATPase subunit of a proteasome-like degradation complex; this subunit has chaperone activity. The binding of ATP and its subsequent hydrolysis by HslU are essential for unfolding of protein substrates subsequently hydrolyzed by HslV. HslU recognizes the N-terminal part of its protein substrates and unfolds these before they are guided to HslV for hydrolysis. This Burkholderia cenocepacia (strain HI2424) protein is ATP-dependent protease ATPase subunit HslU.